Reading from the N-terminus, the 259-residue chain is Phosphate import ATP-binding protein PstB (259 aa).

An ABC transporter domain is found at 11-254 (AEARNLNFYY…PQDKRTEDYI (244 aa)). 43–50 (GPSGCGKS) is an ATP binding site.

Belongs to the ABC transporter superfamily. Phosphate importer (TC 3.A.1.7) family. In terms of assembly, the complex is composed of two ATP-binding proteins (PstB), two transmembrane proteins (PstC and PstA) and a solute-binding protein (PstS).

It localises to the cell inner membrane. It carries out the reaction phosphate(out) + ATP + H2O = ADP + 2 phosphate(in) + H(+). In terms of biological role, part of the ABC transporter complex PstSACB involved in phosphate import. Responsible for energy coupling to the transport system. The chain is Phosphate import ATP-binding protein PstB from Dechloromonas aromatica (strain RCB).